A 125-amino-acid polypeptide reads, in one-letter code: UPF0231 protein in hemN 3'region (125 aa).

Belongs to the UPF0231 family.

The polypeptide is UPF0231 protein in hemN 3'region (Mannheimia haemolytica (Pasteurella haemolytica)).